Consider the following 374-residue polypeptide: Ribosomal RNA large subunit methyltransferase M (374 aa).

Residues Ser188, 221-224 (CPGG), Asp240, Asp260, and Asp276 contribute to the S-adenosyl-L-methionine site. Lys305 acts as the Proton acceptor in catalysis.

It belongs to the class I-like SAM-binding methyltransferase superfamily. RNA methyltransferase RlmE family. RlmM subfamily. In terms of assembly, monomer.

The protein localises to the cytoplasm. It carries out the reaction cytidine(2498) in 23S rRNA + S-adenosyl-L-methionine = 2'-O-methylcytidine(2498) in 23S rRNA + S-adenosyl-L-homocysteine + H(+). Functionally, catalyzes the 2'-O-methylation at nucleotide C2498 in 23S rRNA. This Edwardsiella ictaluri (strain 93-146) protein is Ribosomal RNA large subunit methyltransferase M.